The chain runs to 394 residues: MSLGTSEQSEIREIVAGSAPARFARGWHCLGLAKDFKDGKPHSVHAFGTKLVVWADSNDEIRILDAYCRHMGGDLSQGTVKGDEIACPFHDWRWGGNGRCKNIPYARRVPPIAKTRAWHTLDQDGLLFVWHDPQGNPPPADVTIPRIAGATSDEWTDWVWYTTEVDTNCREIIDNIVDMAHFFYVHYSFPVYFKNVFEGHVASQFMRGQAREDTRPHANGQPKMIGSRSDASYFGPSFMIDDLVYEYEGYDVESVLINCHYPVSQDKFVLMYGMIVKKSDRLEGEKALQTAQQFGNFIAKGFEQDIEIWRNKTRIDNPLLCEEDGPVYQLRRWYEQFYVDVEDVAPEMTDRFEFEMDTTRPVAAWMKEVEANIARKAALDTETRSAPEQSTTAG.

The Rieske domain maps to 27–129 (WHCLGLAKDF…TLDQDGLLFV (103 aa)). 4 residues coordinate [2Fe-2S] cluster: Cys-68, His-70, Cys-87, and His-90. Fe cation is bound by residues Asn-175, His-181, and His-186. Tyr-245 lines the substrate pocket. Fe cation is bound at residue Asp-305.

In terms of assembly, homotrimer. The two-component system 3-ketosteroid-9-alpha-monooxygenase is composed of an oxygenase component KshA and a reductase component KshB. Requires [2Fe-2S] cluster as cofactor. It depends on Fe cation as a cofactor.

It catalyses the reaction androsta-1,4-diene-3,17-dione + 2 reduced [2Fe-2S]-[ferredoxin] + O2 + 2 H(+) = 9alpha-hydroxyandrosta-1,4-diene-3,17-dione + 2 oxidized [2Fe-2S]-[ferredoxin] + H2O. Functionally, may be involved in the degradation of cholic acid, a steroid acid found predominantly in the bile. In vitro, catalyzes the introduction of a 9alpha-hydroxyl moiety into the ring B of 3-ketosteroid substrates such as 1,4-androstadiene-3,17-dione (ADD), 4-androstene-3,17-dione (AD), 4-androstene-17beta-ol-3-one (testosterone), 4-pregnene-3,20-dione (progesterone), 3-oxo-23,24-bisnorcholesta-4-en-22-oate (4-BNC), 23,24-bisnorcholesta-4-ene-22-oate, 3-oxo-23,24-bisnorcholaesta-1,4-dien-22-oate (1,4-BNC), 23,24-bisnorcholesta-1,4-diene-22-oate and 3-oxo-23,24-bisnorcholesta-1,4-dien-22-oyl-coenzyme A thioester (1,4-BNC-CoA). KshA1 has the highest specificity for steroids possessing an isopropionyl side chain at C17. This chain is 3-ketosteroid-9-alpha-monooxygenase, oxygenase component, found in Rhodococcus rhodochrous.